A 268-amino-acid chain; its full sequence is Small ribosomal subunit protein mS43 (268 aa).

Residues 1–23 (MLNTGLRKGLALSPITHLLKRCS) constitute a mitochondrion transit peptide.

Belongs to the mitochondrion-specific ribosomal protein mS43 family. As to quaternary structure, component of the mitochondrial small ribosomal subunit (mt-SSU). Mature yeast 74S mitochondrial ribosomes consist of a small (37S) and a large (54S) subunit. The 37S small subunit contains a 15S ribosomal RNA (15S mt-rRNA) and at least 32 different proteins. The 54S large subunit contains a 21S rRNA (21S mt-rRNA) and at least 45 different proteins. mS43 forms a dimer with mS42, building a large protuberance adjacent to the mRNA channel exit in the mt-SSU body.

The protein localises to the mitochondrion. Its function is as follows. Component of the mitochondrial ribosome (mitoribosome), a dedicated translation machinery responsible for the synthesis of mitochondrial genome-encoded proteins, including at least some of the essential transmembrane subunits of the mitochondrial respiratory chain. The mitoribosomes are attached to the mitochondrial inner membrane and translation products are cotranslationally integrated into the membrane. This chain is Small ribosomal subunit protein mS43, found in Schizosaccharomyces pombe (strain 972 / ATCC 24843) (Fission yeast).